A 662-amino-acid polypeptide reads, in one-letter code: UvrABC system protein B (662 aa).

The region spanning 25–182 is the Helicase ATP-binding domain; sequence KGIEKREKFQ…KKLVEIQYER (158 aa). Residue 38-45 coordinates ATP; that stretch reads GVTGSGKT. Residues 91 to 114 carry the Beta-hairpin motif; that stretch reads YYDYYQPEAYVAQSDTYIEKDASI. The region spanning 429–595 is the Helicase C-terminal domain; sequence QIDDLYTSIQ…TIIKDIREVI (167 aa). The region spanning 622 to 657 is the UVR domain; sequence DKLIEKYEEEMKEAAQNLQFEKAAHLRDVIYKLKKD.

Belongs to the UvrB family. In terms of assembly, forms a heterotetramer with UvrA during the search for lesions. Interacts with UvrC in an incision complex.

It localises to the cytoplasm. In terms of biological role, the UvrABC repair system catalyzes the recognition and processing of DNA lesions. A damage recognition complex composed of 2 UvrA and 2 UvrB subunits scans DNA for abnormalities. Upon binding of the UvrA(2)B(2) complex to a putative damaged site, the DNA wraps around one UvrB monomer. DNA wrap is dependent on ATP binding by UvrB and probably causes local melting of the DNA helix, facilitating insertion of UvrB beta-hairpin between the DNA strands. Then UvrB probes one DNA strand for the presence of a lesion. If a lesion is found the UvrA subunits dissociate and the UvrB-DNA preincision complex is formed. This complex is subsequently bound by UvrC and the second UvrB is released. If no lesion is found, the DNA wraps around the other UvrB subunit that will check the other stand for damage. This is UvrABC system protein B from Clostridium botulinum (strain Kyoto / Type A2).